Reading from the N-terminus, the 276-residue chain is tRNA dimethylallyltransferase (276 aa).

The segment at aspartate 9 to serine 12 is interaction with substrate tRNA.

It belongs to the IPP transferase family. As to quaternary structure, monomer. It depends on Mg(2+) as a cofactor.

The enzyme catalyses adenosine(37) in tRNA + dimethylallyl diphosphate = N(6)-dimethylallyladenosine(37) in tRNA + diphosphate. Its function is as follows. Catalyzes the transfer of a dimethylallyl group onto the adenine at position 37 in tRNAs that read codons beginning with uridine, leading to the formation of N6-(dimethylallyl)adenosine (i(6)A). The chain is tRNA dimethylallyltransferase (miaA) from Helicobacter pylori (strain Shi470).